The primary structure comprises 103 residues: Large ribosomal subunit protein eL14 (103 aa).

The protein belongs to the eukaryotic ribosomal protein eL14 family.

The polypeptide is Large ribosomal subunit protein eL14 (Pyrobaculum arsenaticum (strain DSM 13514 / JCM 11321 / PZ6)).